Reading from the N-terminus, the 1479-residue chain is Putative receptor-type tyrosine-protein phosphatase mosPTP-1 (1479 aa).

A signal peptide spans 1-28 (MKPRLLTTVTTWLALVLPVVYLSRPCQA). Residues 29–365 (LPTVNFTANY…RQSYNDYNLA (337 aa)) are Extracellular-facing. N33, N40, N146, N182, N248, N294, and N306 each carry an N-linked (GlcNAc...) asparagine glycan. Fibronectin type-III domains are found at residues 143 to 242 (KPLN…AGPS) and 243 to 346 (APKV…VQLN). Residues 366–386 (VMIGILICCFGLLFIVLTILL) traverse the membrane as a helical segment. Over 387-1479 (WKKCFHAAYY…AKLRAVVRVE (1093 aa)) the chain is Cytoplasmic. Tyrosine-protein phosphatase domains lie at 452–717 (FSKE…LVEA) and 740–992 (IDSQ…LSYM). The active-site Phosphocysteine intermediate is C658.

It belongs to the protein-tyrosine phosphatase family. Receptor class subfamily. As to quaternary structure, interacts with C-type lectin mosGCTL-1. Interacts with C-type lectin mosGCTL-7.

Its subcellular location is the cell membrane. The catalysed reaction is O-phospho-L-tyrosyl-[protein] + H2O = L-tyrosyl-[protein] + phosphate. In terms of biological role, putative protein tyrosine-protein phosphatase. Functionally, (Microbial infection) Facilitates West Nile virus infection in mosquitoes. This Culex quinquefasciatus (Southern house mosquito) protein is Putative receptor-type tyrosine-protein phosphatase mosPTP-1.